Here is a 312-residue protein sequence, read N- to C-terminus: tRNA uridine(34) hydroxylase (312 aa).

In terms of domain architecture, Rhodanese spans 130-225; it reads RGDEVVFFDG…YGEQFGNKGL (96 aa). The active-site Cysteine persulfide intermediate is the Cys185.

The protein belongs to the TrhO family.

It catalyses the reaction uridine(34) in tRNA + AH2 + O2 = 5-hydroxyuridine(34) in tRNA + A + H2O. Catalyzes oxygen-dependent 5-hydroxyuridine (ho5U) modification at position 34 in tRNAs. The protein is tRNA uridine(34) hydroxylase of Corynebacterium glutamicum (strain R).